Consider the following 969-residue polypeptide: RNA polymerase-associated protein RapA (969 aa).

The Helicase ATP-binding domain maps to 164 to 334 (EVGRRHAPRV…FARLRLLDPD (171 aa)). Position 177–184 (177–184 (DEVGLGKT)) interacts with ATP. Positions 280-283 (DEAH) match the DEAH box motif. Residues 492-686 (RVNWLLEKVK…ELKSQLEQGR (195 aa)) form the Helicase C-terminal domain.

This sequence belongs to the SNF2/RAD54 helicase family. RapA subfamily. Interacts with the RNAP. Has a higher affinity for the core RNAP than for the holoenzyme. Its ATPase activity is stimulated by binding to RNAP.

Its function is as follows. Transcription regulator that activates transcription by stimulating RNA polymerase (RNAP) recycling in case of stress conditions such as supercoiled DNA or high salt concentrations. Probably acts by releasing the RNAP, when it is trapped or immobilized on tightly supercoiled DNA. Does not activate transcription on linear DNA. Probably not involved in DNA repair. The protein is RNA polymerase-associated protein RapA of Vibrio parahaemolyticus serotype O3:K6 (strain RIMD 2210633).